A 1227-amino-acid polypeptide reads, in one-letter code: Beta-alanyl-bioamine nonribosomal peptide synthetase (1227 aa).

Residues 1-850 (MPQSTAQLKS…FGKNSRDFKL (850 aa)) form an adenylation region. Positions 851–931 (SRGRERARKV…SILTSLQNTE (81 aa)) constitute a Carrier domain. Residue Ser892 is modified to O-(pantetheine 4'-phosphoryl)serine. The interval 932-1227 (SDFLKTQEPF…YMIKELNPSS (296 aa)) is condensation.

Belongs to the NRP synthetase family. Requires pantetheine 4'-phosphate as cofactor. As to expression, in virgin and paired males, bilaterally expressed in some cells in the head. During pairing, expressed throughout the ventral side of the body probably in ciliated neurons. Highly expressed in virgin females in cells throughout the body and only weakly expressed in sexually mature females. In virgin females, expressed in some cells in the head and on the dorsal surface and lateral edges of body.

It catalyses the reaction tryptamine + beta-alanine + ATP = beta-alanyl-tryptamine + AMP + diphosphate + H(+). The enzyme catalyses beta-alanine + ATP + H(+) = beta-alanyl-5'-AMP + diphosphate. It carries out the reaction beta-alanyl-5'-AMP + holo-[peptidyl-carrier protein] = beta-alanyl-[peptidyl-carrier protein] + AMP + H(+). The catalysed reaction is beta-alanyl-[peptidyl-carrier protein] + tryptamine = beta-alanyl-tryptamine + holo-[peptidyl-carrier protein] + H(+). Functionally, catalyzes the condensation of beta-alanine with tryptamine to form beta-alanyl-tryptamine (BATT). Beta-alanyl-tryptamine is an essential pheromone produced by the male that stimulates female sexual development during pairing. In Schistosoma mansoni (Blood fluke), this protein is Beta-alanyl-bioamine nonribosomal peptide synthetase.